The chain runs to 453 residues: tRNA modification GTPase MnmE (453 aa).

(6S)-5-formyl-5,6,7,8-tetrahydrofolate contacts are provided by Arg22, Glu79, and Lys119. The 162-residue stretch at Gly215–Gly376 folds into the TrmE-type G domain. Asn225 serves as a coordination point for K(+). Residues Asn225–Ser230, Thr244–Thr250, Asp269–Gly272, and Asn334–Asp337 each bind GTP. Residue Ser229 participates in Mg(2+) binding. K(+) contacts are provided by Thr244, Ile246, and Thr249. Thr250 is a binding site for Mg(2+). Lys453 contacts (6S)-5-formyl-5,6,7,8-tetrahydrofolate.

This sequence belongs to the TRAFAC class TrmE-Era-EngA-EngB-Septin-like GTPase superfamily. TrmE GTPase family. In terms of assembly, homodimer. Heterotetramer of two MnmE and two MnmG subunits. The cofactor is K(+).

It is found in the cytoplasm. Exhibits a very high intrinsic GTPase hydrolysis rate. Involved in the addition of a carboxymethylaminomethyl (cmnm) group at the wobble position (U34) of certain tRNAs, forming tRNA-cmnm(5)s(2)U34. The polypeptide is tRNA modification GTPase MnmE (Shewanella woodyi (strain ATCC 51908 / MS32)).